We begin with the raw amino-acid sequence, 215 residues long: Orotate phosphoribosyltransferase (215 aa).

K26 is a binding site for 5-phospho-alpha-D-ribose 1-diphosphate. 34-35 contacts orotate; the sequence is FF. 5-phospho-alpha-D-ribose 1-diphosphate-binding positions include 72 to 73, R99, K100, K103, H105, and 124 to 132; these read YK and DDVITAGTA. The orotate site is built by T128 and R156.

The protein belongs to the purine/pyrimidine phosphoribosyltransferase family. PyrE subfamily. As to quaternary structure, homodimer. Mg(2+) is required as a cofactor.

It carries out the reaction orotidine 5'-phosphate + diphosphate = orotate + 5-phospho-alpha-D-ribose 1-diphosphate. Its pathway is pyrimidine metabolism; UMP biosynthesis via de novo pathway; UMP from orotate: step 1/2. Its function is as follows. Catalyzes the transfer of a ribosyl phosphate group from 5-phosphoribose 1-diphosphate to orotate, leading to the formation of orotidine monophosphate (OMP). The sequence is that of Orotate phosphoribosyltransferase from Hahella chejuensis (strain KCTC 2396).